Reading from the N-terminus, the 344-residue chain is Holliday junction branch migration complex subunit RuvB (344 aa).

The large ATPase domain (RuvB-L) stretch occupies residues 1–183 (MPDRELISGD…FGLVLRLDPY (183 aa)). Residues Leu22, Arg23, Gly64, Lys67, Thr68, Thr69, 130–132 (EDF), Arg173, Tyr183, and Arg220 each bind ATP. Thr68 contributes to the Mg(2+) binding site. Positions 184 to 254 (NTEELKAIVK…VAQTALNLLD (71 aa)) are small ATPAse domain (RuvB-S). Residues 257–344 (RYGLDEIDQK…EGDHPSLFEA (88 aa)) form a head domain (RuvB-H) region. Residues Arg312 and Arg317 each coordinate DNA.

Belongs to the RuvB family. In terms of assembly, homohexamer. Forms an RuvA(8)-RuvB(12)-Holliday junction (HJ) complex. HJ DNA is sandwiched between 2 RuvA tetramers; dsDNA enters through RuvA and exits via RuvB. An RuvB hexamer assembles on each DNA strand where it exits the tetramer. Each RuvB hexamer is contacted by two RuvA subunits (via domain III) on 2 adjacent RuvB subunits; this complex drives branch migration. In the full resolvosome a probable DNA-RuvA(4)-RuvB(12)-RuvC(2) complex forms which resolves the HJ.

The protein localises to the cytoplasm. The catalysed reaction is ATP + H2O = ADP + phosphate + H(+). Its function is as follows. The RuvA-RuvB-RuvC complex processes Holliday junction (HJ) DNA during genetic recombination and DNA repair, while the RuvA-RuvB complex plays an important role in the rescue of blocked DNA replication forks via replication fork reversal (RFR). RuvA specifically binds to HJ cruciform DNA, conferring on it an open structure. The RuvB hexamer acts as an ATP-dependent pump, pulling dsDNA into and through the RuvAB complex. RuvB forms 2 homohexamers on either side of HJ DNA bound by 1 or 2 RuvA tetramers; 4 subunits per hexamer contact DNA at a time. Coordinated motions by a converter formed by DNA-disengaged RuvB subunits stimulates ATP hydrolysis and nucleotide exchange. Immobilization of the converter enables RuvB to convert the ATP-contained energy into a lever motion, pulling 2 nucleotides of DNA out of the RuvA tetramer per ATP hydrolyzed, thus driving DNA branch migration. The RuvB motors rotate together with the DNA substrate, which together with the progressing nucleotide cycle form the mechanistic basis for DNA recombination by continuous HJ branch migration. Branch migration allows RuvC to scan DNA until it finds its consensus sequence, where it cleaves and resolves cruciform DNA. The sequence is that of Holliday junction branch migration complex subunit RuvB from Solibacter usitatus (strain Ellin6076).